Reading from the N-terminus, the 883-residue chain is Alanine--tRNA ligase (883 aa).

Residues His-563, His-567, Cys-677, and His-681 each contribute to the Zn(2+) site.

It belongs to the class-II aminoacyl-tRNA synthetase family. Zn(2+) serves as cofactor.

The protein localises to the cytoplasm. The catalysed reaction is tRNA(Ala) + L-alanine + ATP = L-alanyl-tRNA(Ala) + AMP + diphosphate. Its function is as follows. Catalyzes the attachment of alanine to tRNA(Ala) in a two-step reaction: alanine is first activated by ATP to form Ala-AMP and then transferred to the acceptor end of tRNA(Ala). Also edits incorrectly charged Ser-tRNA(Ala) and Gly-tRNA(Ala) via its editing domain. In Cereibacter sphaeroides (strain ATCC 17025 / ATH 2.4.3) (Rhodobacter sphaeroides), this protein is Alanine--tRNA ligase.